Consider the following 194-residue polypeptide: dITP/XTP pyrophosphatase (194 aa).

Thr-9–Lys-14 is a substrate binding site. Mg(2+)-binding residues include Asp-40 and Asp-69. Asp-69 serves as the catalytic Proton acceptor. Residues Ser-70, Phe-152 to Asp-155, Lys-175, and His-180 to Arg-181 contribute to the substrate site.

This sequence belongs to the HAM1 NTPase family. As to quaternary structure, homodimer. Mg(2+) serves as cofactor.

The catalysed reaction is XTP + H2O = XMP + diphosphate + H(+). The enzyme catalyses dITP + H2O = dIMP + diphosphate + H(+). It carries out the reaction ITP + H2O = IMP + diphosphate + H(+). Pyrophosphatase that catalyzes the hydrolysis of nucleoside triphosphates to their monophosphate derivatives, with a high preference for the non-canonical purine nucleotides XTP (xanthosine triphosphate), dITP (deoxyinosine triphosphate) and ITP. Seems to function as a house-cleaning enzyme that removes non-canonical purine nucleotides from the nucleotide pool, thus preventing their incorporation into DNA/RNA and avoiding chromosomal lesions. The sequence is that of dITP/XTP pyrophosphatase from Caulobacter vibrioides (strain ATCC 19089 / CIP 103742 / CB 15) (Caulobacter crescentus).